The primary structure comprises 675 residues: MRVNDNQPFDLVTNYQPAGDQPQAIKKLVSGIEQGNRNQLLLGVTGSGKTYTMANVIAQTQRPTIVMAHNKTLAAQLYGEFKAFFPNNAVEYFVSYYDYYQPEAYVPSSDTFIEKDAAINDHIDQMRLSATRALLERRDAIIVASVSAIYGLGDPEAYMKMLLHVVEGDRINRDDLIRRLVEMQYTRNELEFLRGTYRIRGEILDVFPAESDQFAIRIELFDDEVDSIRWFDPLTGKMQRKVPRVTIYPKSHYVTPKDNLSRAIETIKDELQDQLKFFREHDKLLEAQRIEQRTRYDLEMMQQLGYTNGIENYSRHLSGRSPGAAPPTLFDYIPEDALLIIDESHVTVPQIGAMYKGDRSRKENLVNYGFRLPSALDNRPMKFEEWERIVPTTVFVSATPAKYELEKSDQIVEQVVRPTGLIDPEIEIRPVLTQVDDVLSEINIRKEMDERVLITTLTKRMAEDLTSYLKEYGVKVAYLHSDIDTVERVKIIHELRTGVYDVLVGINLLREGLDMPEVSLVAILDADKEGFLRSERSLIQTIGRAARNIKGKAILYADRMTDSMQKAIDETERRREKQIEFNKIHGITPRSAVRQKVKEIDTGEVFNDDDIEGKISEQARALSADERHILADPKLFAKHMSKLEKEMLKASKELQFEQAARLRDEILRLKAQMLH.

One can recognise a Helicase ATP-binding domain in the interval 30–417; it reads SGIEQGNRNQ…SDQIVEQVVR (388 aa). 43–50 contacts ATP; the sequence is GVTGSGKT. Positions 96–119 match the Beta-hairpin motif; the sequence is YYDYYQPEAYVPSSDTFIEKDAAI. The region spanning 434–601 is the Helicase C-terminal domain; that stretch reads QVDDVLSEIN…AVRQKVKEID (168 aa). One can recognise a UVR domain in the interval 637 to 672; that stretch reads AKHMSKLEKEMLKASKELQFEQAARLRDEILRLKAQ.

This sequence belongs to the UvrB family. In terms of assembly, forms a heterotetramer with UvrA during the search for lesions. Interacts with UvrC in an incision complex.

The protein resides in the cytoplasm. In terms of biological role, the UvrABC repair system catalyzes the recognition and processing of DNA lesions. A damage recognition complex composed of 2 UvrA and 2 UvrB subunits scans DNA for abnormalities. Upon binding of the UvrA(2)B(2) complex to a putative damaged site, the DNA wraps around one UvrB monomer. DNA wrap is dependent on ATP binding by UvrB and probably causes local melting of the DNA helix, facilitating insertion of UvrB beta-hairpin between the DNA strands. Then UvrB probes one DNA strand for the presence of a lesion. If a lesion is found the UvrA subunits dissociate and the UvrB-DNA preincision complex is formed. This complex is subsequently bound by UvrC and the second UvrB is released. If no lesion is found, the DNA wraps around the other UvrB subunit that will check the other stand for damage. The chain is UvrABC system protein B from Acinetobacter baylyi (strain ATCC 33305 / BD413 / ADP1).